A 150-amino-acid chain; its full sequence is Lipoprotein signal peptidase (150 aa).

2 helical membrane passes run 58–78 (FFIIVSIILILFLCYMIFKST) and 85–107 (SFSLIVGGAIGNLFDRIVKGYVV). Residues Asp-108 and Asp-122 contribute to the active site. A helical membrane pass occupies residues 117–137 (VFNLADFFITGGVLLLTFLIL).

This sequence belongs to the peptidase A8 family.

The protein localises to the cell membrane. It catalyses the reaction Release of signal peptides from bacterial membrane prolipoproteins. Hydrolyzes -Xaa-Yaa-Zaa-|-(S,diacylglyceryl)Cys-, in which Xaa is hydrophobic (preferably Leu), and Yaa (Ala or Ser) and Zaa (Gly or Ala) have small, neutral side chains.. Its pathway is protein modification; lipoprotein biosynthesis (signal peptide cleavage). Its function is as follows. This protein specifically catalyzes the removal of signal peptides from prolipoproteins. This chain is Lipoprotein signal peptidase, found in Caldicellulosiruptor bescii (strain ATCC BAA-1888 / DSM 6725 / KCTC 15123 / Z-1320) (Anaerocellum thermophilum).